The following is a 256-amino-acid chain: Trans-aconitate 2-methyltransferase (256 aa).

The protein belongs to the methyltransferase superfamily. Tam family.

The protein localises to the cytoplasm. The catalysed reaction is trans-aconitate + S-adenosyl-L-methionine = (E)-3-(methoxycarbonyl)pent-2-enedioate + S-adenosyl-L-homocysteine. Its function is as follows. Catalyzes the S-adenosylmethionine monomethyl esterification of trans-aconitate. The protein is Trans-aconitate 2-methyltransferase of Agrobacterium fabrum (strain C58 / ATCC 33970) (Agrobacterium tumefaciens (strain C58)).